Reading from the N-terminus, the 494-residue chain is PTS system cellobiose-specific EIIC component (494 aa).

The 474-residue stretch at 8–481 (MEKYLVPVAA…IITFVIWVPF (474 aa)) folds into the PTS EIIC type-3 domain. A run of 9 helical transmembrane segments spans residues 32-52 (FIGMLPATLAGALAAMISAIV), 92-112 (ISALVNQGTLTVIGLIFAFSW), 119-139 (AYGVNDLAGGIVSLATLFAGL), 188-208 (AYFTVIIMGALAVIIYAKLML), 227-247 (FLAIIPTIAALYIVGLIYYII), 274-294 (IFSVLIVTLFVSVFWFFGLHG), 355-375 (AFAWFGGSGGTITLVIAIILF), 406-426 (VVLNAIFFIPFAVAPLISVII), and 463-483 (AIVLTIINLIITFVIWVPFVI).

The protein resides in the cell membrane. Functionally, the phosphoenolpyruvate-dependent sugar phosphotransferase system (PTS), a major carbohydrate active transport system, catalyzes the phosphorylation of incoming sugar substrates concomitant with their translocation across the cell membrane. Involved in cellobiose transport with PtcA and PtcB. This system can also transport lactose. This is PTS system cellobiose-specific EIIC component from Lactococcus lactis subsp. lactis (strain IL1403) (Streptococcus lactis).